The chain runs to 508 residues: Maturase K (508 aa).

Belongs to the intron maturase 2 family. MatK subfamily.

Its subcellular location is the plastid. It is found in the chloroplast. In terms of biological role, usually encoded in the trnK tRNA gene intron. Probably assists in splicing its own and other chloroplast group II introns. This chain is Maturase K, found in Marathrum schiedeanum.